A 417-amino-acid polypeptide reads, in one-letter code: Squalene synthase (417 aa).

Residues Arg-52 and Arg-77 each contribute to the NADP(+) site. Asp-80, Glu-83, and Asp-84 together coordinate Mg(2+). Arg-218 serves as a coordination point for NADP(+). The helical transmembrane segment at 284–304 (SVFNFCAIPQVMAIATLAACY) threads the bilayer. NADP(+) contacts are provided by Lys-315 and Arg-317. Residues 384–404 (PIYLSFVMLLAALSWQYLTTL) form a helical membrane-spanning segment.

It belongs to the phytoene/squalene synthase family. Mg(2+) is required as a cofactor. As to expression, widely expressed.

It localises to the endoplasmic reticulum membrane. It carries out the reaction 2 (2E,6E)-farnesyl diphosphate + NADPH + H(+) = squalene + 2 diphosphate + NADP(+). The catalysed reaction is 2 (2E,6E)-farnesyl diphosphate + NADH + H(+) = squalene + 2 diphosphate + NAD(+). The enzyme catalyses 2 (2E,6E)-farnesyl diphosphate = presqualene diphosphate + diphosphate. It catalyses the reaction presqualene diphosphate + NADH + H(+) = squalene + diphosphate + NAD(+). It carries out the reaction presqualene diphosphate + NADPH + H(+) = squalene + diphosphate + NADP(+). It functions in the pathway terpene metabolism; lanosterol biosynthesis; lanosterol from farnesyl diphosphate: step 1/3. Catalyzes the condensation of 2 farnesyl pyrophosphate (FPP) moieties to form squalene. Proceeds in two distinct steps. In the first half-reaction, two molecules of FPP react to form the stable presqualene diphosphate intermediate (PSQPP), with concomitant release of a proton and a molecule of inorganic diphosphate. In the second half-reaction, PSQPP undergoes heterolysis, isomerization, and reduction with NADPH or NADH to form squalene. It is the first committed enzyme of the sterol biosynthesis pathway. The sequence is that of Squalene synthase (FDFT1) from Homo sapiens (Human).